Consider the following 318-residue polypeptide: Thiohydrolase aneE (318 aa).

This sequence belongs to the polyketide transferase af380 family.

It carries out the reaction aculene D + L-prolyl-[peptidyl-carrier protein] = aculene B + holo-[peptidyl-carrier protein]. The catalysed reaction is aculene C + L-prolyl-[peptidyl-carrier protein] = aculene A + holo-[peptidyl-carrier protein]. It functions in the pathway secondary metabolite biosynthesis. Functionally, thiohydrolase; part of the gene cluster that mediates the biosynthesis of aculenes, a unique type of norsesquiterpenes that contain a nordaucane skeleton linked to an L-proline moiety and are of mixed biosynthetic origin. The pathway begins with the synthesis of dauca-4,7-diene by the terpene cyclase aneC using farnesyl pyrophosphate (FPP) as substrate. The cytochrome P450 monooxygenase aneF then performs the initial oxidation at C-12 of dauca-4,7-diene to yield asperaculane D. Asperaculane D is substrate of the cytochrome P450 monooxygenase aneD for C-10 hydroxylation to yield asperaculane E. The cytochrome P450 monooxygenase aneG then converts asperaculane E into aculene D via C-2 oxidation. The monomodular nonribosomal peptide synthtase aneB adenylates L-proline and the thiohydrolase aneE transfers this activated L-proline derivative to aculenes D and C to produce respectively aculenes B and A. The dioxygenase aneA converts aculene D into aculene C, and aculene B into aculene A by introducing the 5,6-alkene moiety. Asperculanes A, B, C and F, as well as 14-prolyl asperculane C, might be shunt products of the pathway. The polypeptide is Thiohydrolase aneE (Aspergillus aculeatus (strain ATCC 16872 / CBS 172.66 / WB 5094)).